The chain runs to 156 residues: MPRRREVPKRVILPDPKYNDKTVAKLINILMVGGKKSVAESILYRALDIVESKSGEEAVKALKKCLDNIKPALEVKSRRVGGSTYQVPVEVRPDRRVSLAMRWLIKYSAARSEKTMTEKMAGEILDAFNSRGAAVKKREDTHKMAEANRAFAHYRW.

Belongs to the universal ribosomal protein uS7 family. Part of the 30S ribosomal subunit. Contacts proteins S9 and S11.

Functionally, one of the primary rRNA binding proteins, it binds directly to 16S rRNA where it nucleates assembly of the head domain of the 30S subunit. Is located at the subunit interface close to the decoding center, probably blocks exit of the E-site tRNA. The polypeptide is Small ribosomal subunit protein uS7 (Trichlorobacter lovleyi (strain ATCC BAA-1151 / DSM 17278 / SZ) (Geobacter lovleyi)).